The following is a 428-amino-acid chain: 3-phosphoshikimate 1-carboxyvinyltransferase (428 aa).

Positions 23, 24, and 28 each coordinate 3-phosphoshikimate. Position 23 (K23) interacts with phosphoenolpyruvate. Phosphoenolpyruvate-binding residues include G97 and R125. 3-phosphoshikimate contacts are provided by S170, S171, Q172, S198, D314, N337, and K341. Q172 contacts phosphoenolpyruvate. The active-site Proton acceptor is D314. The phosphoenolpyruvate site is built by R345, R387, and K412.

Belongs to the EPSP synthase family. Monomer.

It is found in the cytoplasm. The catalysed reaction is 3-phosphoshikimate + phosphoenolpyruvate = 5-O-(1-carboxyvinyl)-3-phosphoshikimate + phosphate. The protein operates within metabolic intermediate biosynthesis; chorismate biosynthesis; chorismate from D-erythrose 4-phosphate and phosphoenolpyruvate: step 6/7. Functionally, catalyzes the transfer of the enolpyruvyl moiety of phosphoenolpyruvate (PEP) to the 5-hydroxyl of shikimate-3-phosphate (S3P) to produce enolpyruvyl shikimate-3-phosphate and inorganic phosphate. The chain is 3-phosphoshikimate 1-carboxyvinyltransferase from Yersinia pestis bv. Antiqua (strain Antiqua).